The sequence spans 279 residues: Acetyl-coenzyme A carboxylase carboxyl transferase subunit beta (279 aa).

Residues 23 to 279 (LWWKCESCGA…LSQILGHLSS (257 aa)) enclose the CoA carboxyltransferase N-terminal domain. Positions 27, 30, 46, and 49 each coordinate Zn(2+). A C4-type zinc finger spans residues 27–49 (CESCGAMLHKKQVEDHFYTCCEC).

Belongs to the AccD/PCCB family. As to quaternary structure, acetyl-CoA carboxylase is a heterohexamer composed of biotin carboxyl carrier protein (AccB), biotin carboxylase (AccC) and two subunits each of ACCase subunit alpha (AccA) and ACCase subunit beta (AccD). Zn(2+) is required as a cofactor.

The protein resides in the cytoplasm. The enzyme catalyses N(6)-carboxybiotinyl-L-lysyl-[protein] + acetyl-CoA = N(6)-biotinyl-L-lysyl-[protein] + malonyl-CoA. The protein operates within lipid metabolism; malonyl-CoA biosynthesis; malonyl-CoA from acetyl-CoA: step 1/1. Component of the acetyl coenzyme A carboxylase (ACC) complex. Biotin carboxylase (BC) catalyzes the carboxylation of biotin on its carrier protein (BCCP) and then the CO(2) group is transferred by the transcarboxylase to acetyl-CoA to form malonyl-CoA. This Prosthecochloris aestuarii (strain DSM 271 / SK 413) protein is Acetyl-coenzyme A carboxylase carboxyl transferase subunit beta.